Reading from the N-terminus, the 384-residue chain is Dual-specificity RNA methyltransferase RlmN (384 aa).

Glu-93 functions as the Proton acceptor in the catalytic mechanism. Positions 99-339 constitute a Radical SAM core domain; that stretch reads EETRGTLCVS…TTIRKTRGDD (241 aa). An intrachain disulfide couples Cys-106 to Cys-344. 3 residues coordinate [4Fe-4S] cluster: Cys-113, Cys-117, and Cys-120. Residues 170-171, Ser-202, 224-226, and Asn-301 each bind S-adenosyl-L-methionine; these read GE and SLH. Cys-344 acts as the S-methylcysteine intermediate in catalysis.

It belongs to the radical SAM superfamily. RlmN family. [4Fe-4S] cluster serves as cofactor.

Its subcellular location is the cytoplasm. The catalysed reaction is adenosine(2503) in 23S rRNA + 2 reduced [2Fe-2S]-[ferredoxin] + 2 S-adenosyl-L-methionine = 2-methyladenosine(2503) in 23S rRNA + 5'-deoxyadenosine + L-methionine + 2 oxidized [2Fe-2S]-[ferredoxin] + S-adenosyl-L-homocysteine. It carries out the reaction adenosine(37) in tRNA + 2 reduced [2Fe-2S]-[ferredoxin] + 2 S-adenosyl-L-methionine = 2-methyladenosine(37) in tRNA + 5'-deoxyadenosine + L-methionine + 2 oxidized [2Fe-2S]-[ferredoxin] + S-adenosyl-L-homocysteine. In terms of biological role, specifically methylates position 2 of adenine 2503 in 23S rRNA and position 2 of adenine 37 in tRNAs. m2A2503 modification seems to play a crucial role in the proofreading step occurring at the peptidyl transferase center and thus would serve to optimize ribosomal fidelity. The protein is Dual-specificity RNA methyltransferase RlmN of Cupriavidus pinatubonensis (strain JMP 134 / LMG 1197) (Cupriavidus necator (strain JMP 134)).